A 410-amino-acid chain; its full sequence is MQTYLVGGAVRDYLLGLPVKDRDWVVVGADAQTMLAQGFQPVGKDFPVFLHPKTHEEYALARTERKTAKGYAGFSFHADKDVTLEQDLMRRDLTINAMAQDADGKIIDPFGGQRDLAAGILRHVSPAFAEDPVRILRAARFAARYGFEIAEETIKLMRQMVENGEADALVAERVWQELAKGLMEKNPRKMIEMLRECGALQVLLPEVDALFGVPQRADYHPEIDSGIHTLMTLQRAADMGLSLPERYAALLHDLGKAKTPPDILPRHHGHDINGVEPVREVNQRLRAPRQCAELAELVCRWHIIFHQVGQLKSQTILNVLKKTDAFRRPERFQTALNVCIADTQGRLNREHTPYPQRAHWLALLEAANQADSGKIAAECRAQGKAHFIAEQIDRARLAQIAPLQKAFRGA.

Residues glycine 8 and arginine 11 each contribute to the ATP site. 2 residues coordinate CTP: glycine 8 and arginine 11. Aspartate 21 and aspartate 23 together coordinate Mg(2+). Residues arginine 91, arginine 137, and arginine 140 each coordinate ATP. CTP is bound by residues arginine 91, arginine 137, and arginine 140. The region spanning 225-326 is the HD domain; it reads SGIHTLMTLQ…LNVLKKTDAF (102 aa).

This sequence belongs to the tRNA nucleotidyltransferase/poly(A) polymerase family. Bacterial CCA-adding enzyme type 1 subfamily. As to quaternary structure, monomer. Can also form homodimers and oligomers. It depends on Mg(2+) as a cofactor. Ni(2+) serves as cofactor.

It carries out the reaction a tRNA precursor + 2 CTP + ATP = a tRNA with a 3' CCA end + 3 diphosphate. The catalysed reaction is a tRNA with a 3' CCA end + 2 CTP + ATP = a tRNA with a 3' CCACCA end + 3 diphosphate. Its function is as follows. Catalyzes the addition and repair of the essential 3'-terminal CCA sequence in tRNAs without using a nucleic acid template. Adds these three nucleotides in the order of C, C, and A to the tRNA nucleotide-73, using CTP and ATP as substrates and producing inorganic pyrophosphate. tRNA 3'-terminal CCA addition is required both for tRNA processing and repair. Also involved in tRNA surveillance by mediating tandem CCA addition to generate a CCACCA at the 3' terminus of unstable tRNAs. While stable tRNAs receive only 3'-terminal CCA, unstable tRNAs are marked with CCACCA and rapidly degraded. In Neisseria gonorrhoeae (strain NCCP11945), this protein is Multifunctional CCA protein.